The following is a 370-amino-acid chain: Accessory Sec system protein translocase subunit SecY2 (370 aa).

9 consecutive transmembrane segments (helical) span residues 17 to 37, 65 to 85, 105 to 125, 134 to 154, 155 to 175, 188 to 208, 240 to 260, 276 to 296, and 339 to 359; these read IIFT…PAIT, VFSL…LFYY, IFTL…LLSH, WLII…SDLN, MRFG…RSIM, LLIS…FIEI, IAIM…NLIV, FSTP…SYGI, and WIGA…TLLI.

Belongs to the SecY/SEC61-alpha family. SecY2 subfamily. As to quaternary structure, component of the accessory SecA2/SecY2 protein translocase complex required to export cell wall proteins. May form heterotrimers with SecE and SecG subunits.

It is found in the cell membrane. Part of the accessory SecA2/SecY2 system specifically required for export of possible cell wall proteins. The central subunit of a protein translocation channel. In Staphylococcus carnosus (strain TM300), this protein is Accessory Sec system protein translocase subunit SecY2.